We begin with the raw amino-acid sequence, 190 residues long: Mitochondrial inner membrane protease subunit 1 (190 aa).

Residues S40 and K84 contribute to the active site.

Belongs to the peptidase S26 family. IMP1 subfamily. Component of the mitochondrial inner membrane peptidase (IMP) complex which at least consists of IMP1, IMP2 and SOM1.

It is found in the mitochondrion inner membrane. Its function is as follows. Catalytic component of the mitochondrial inner membrane peptidase (IMP) complex. IMP catalyzes the removal of signal peptides required for the targeting of proteins from the mitochondrial matrix, across the inner membrane, into the inter-membrane space. The two catalytic IMP subunits seem to have non-overlapping substrate specificities. IMP1 substrates include nuclear encoded CYB2, mitochondrially encoded COX2, NADH-cytochrome b5 reductase and GUT2. The chain is Mitochondrial inner membrane protease subunit 1 (IMP1) from Saccharomyces cerevisiae (strain ATCC 204508 / S288c) (Baker's yeast).